The primary structure comprises 298 residues: Acetylglutamate kinase (298 aa).

Substrate is bound by residues 69–70 (GG), arginine 91, and asparagine 196.

This sequence belongs to the acetylglutamate kinase family. ArgB subfamily.

It is found in the cytoplasm. The catalysed reaction is N-acetyl-L-glutamate + ATP = N-acetyl-L-glutamyl 5-phosphate + ADP. It functions in the pathway amino-acid biosynthesis; L-arginine biosynthesis; N(2)-acetyl-L-ornithine from L-glutamate: step 2/4. Catalyzes the ATP-dependent phosphorylation of N-acetyl-L-glutamate. This chain is Acetylglutamate kinase, found in Rhodopseudomonas palustris (strain ATCC BAA-98 / CGA009).